An 846-amino-acid chain; its full sequence is Homeobox protein 12 (846 aa).

Low complexity-rich tracts occupy residues 78-94 (IIGSSSNTLSTPSVQAT), 160-170 (PLSSSSTVVPA), 237-249 (GNHNNNNNNYNYN), 289-301 (QPQSQSQSQQLQP), 309-321 (LQPQLQSQPQSQQ), 331-352 (NNNNNNNNNNNNNNNNNNNNNN), 394-443 (NYNQ…SNSN), and 458-482 (NNNNNNNKTFQQTSQQQQQQQQQIY). Disordered regions lie at residues 78 to 103 (IIGSSSNTLSTPSVQATPPTPPPSSS), 151 to 177 (IVQPPPPSTPLSSSSTVVPASTPPPSV), 230 to 249 (NGNGNGNGNHNNNNNNYNYN), 286 to 374 (GTKQ…SSSP), 394 to 482 (NYNQ…QQIY), and 515 to 571 (FKQN…NNQF). The segment covering 524–546 (NNDDDDDDDDDEEEEEEEEDDND) has biased composition (acidic residues). The stretch at 553-604 (SYDEENNNNNNNNNNNNQFKNESIIIGDNYYEIINDRIKSIKQKLHFLEKNS) forms a coiled coil. A compositionally biased stretch (low complexity) spans 559–569 (NNNNNNNNNNN). The segment at residues 773–835 (DKKNRRTLND…NKRSREKNQR (63 aa)) is a DNA-binding region (homeobox).

It is found in the nucleus. Its function is as follows. Putative transcription factor. The polypeptide is Homeobox protein 12 (hbx12) (Dictyostelium discoideum (Social amoeba)).